The primary structure comprises 218 residues: uncharacterized protein (218 aa).

The region spanning 4-83 (GISIEAENKV…IHSSLKKIYG (80 aa)) is the ACT domain.

This is an uncharacterized protein from Methanocaldococcus jannaschii (strain ATCC 43067 / DSM 2661 / JAL-1 / JCM 10045 / NBRC 100440) (Methanococcus jannaschii).